The sequence spans 1887 residues: Protein TIC 214 (1887 aa).

6 helical membrane-spanning segments follow: residues I18–G38, F64–L84, P87–H107, L124–L144, V172–I192, and I221–I241. Disordered regions lie at residues E248 to D300, R785 to R805, and L1569 to P1603. Residues V256–T268 are compositionally biased toward acidic residues. Residues R1578–N1597 show a composition bias toward basic and acidic residues.

This sequence belongs to the TIC214 family. As to quaternary structure, part of the Tic complex.

It is found in the plastid. The protein localises to the chloroplast inner membrane. Involved in protein precursor import into chloroplasts. May be part of an intermediate translocation complex acting as a protein-conducting channel at the inner envelope. In Solanum tuberosum (Potato), this protein is Protein TIC 214.